A 153-amino-acid chain; its full sequence is Large ribosomal subunit protein uL30 (153 aa).

It belongs to the universal ribosomal protein uL30 family. Part of the 50S ribosomal subunit.

The polypeptide is Large ribosomal subunit protein uL30 (Metallosphaera sedula (strain ATCC 51363 / DSM 5348 / JCM 9185 / NBRC 15509 / TH2)).